A 274-amino-acid chain; its full sequence is GPN-loop GTPase 3 (274 aa).

13–18 (GVGKST) serves as a coordination point for GTP. Positions 70 to 72 (GPN) match the Gly-Pro-Asn (GPN)-loop; involved in dimer interface motif. 173 to 176 (SKID) lines the GTP pocket. The interval 255–274 (SESQEPKEPVEEIEEEVDFE) is disordered. The span at 265-274 (EEIEEEVDFE) shows a compositional bias: acidic residues.

Belongs to the GPN-loop GTPase family. As to quaternary structure, heterodimers with GPN1 or GPN2. Binds to RNA polymerase II (RNAPII).

Small GTPase required for proper nuclear import of RNA polymerase II and III (RNAPII and RNAPIII). May act at an RNAP assembly step prior to nuclear import. The polypeptide is GPN-loop GTPase 3 (Debaryomyces hansenii (strain ATCC 36239 / CBS 767 / BCRC 21394 / JCM 1990 / NBRC 0083 / IGC 2968) (Yeast)).